Here is a 316-residue protein sequence, read N- to C-terminus: 4-hydroxy-3-methylbut-2-enyl diphosphate reductase (316 aa).

Cysteine 12 contributes to the [4Fe-4S] cluster binding site. (2E)-4-hydroxy-3-methylbut-2-enyl diphosphate is bound by residues histidine 41 and histidine 74. Histidine 41 and histidine 74 together coordinate dimethylallyl diphosphate. Residues histidine 41 and histidine 74 each coordinate isopentenyl diphosphate. Cysteine 96 contacts [4Fe-4S] cluster. Histidine 124 provides a ligand contact to (2E)-4-hydroxy-3-methylbut-2-enyl diphosphate. A dimethylallyl diphosphate-binding site is contributed by histidine 124. Histidine 124 lines the isopentenyl diphosphate pocket. The active-site Proton donor is glutamate 126. A (2E)-4-hydroxy-3-methylbut-2-enyl diphosphate-binding site is contributed by threonine 168. Cysteine 198 is a [4Fe-4S] cluster binding site. 4 residues coordinate (2E)-4-hydroxy-3-methylbut-2-enyl diphosphate: serine 226, serine 227, asparagine 228, and serine 270. Serine 226, serine 227, asparagine 228, and serine 270 together coordinate dimethylallyl diphosphate. The isopentenyl diphosphate site is built by serine 226, serine 227, asparagine 228, and serine 270.

It belongs to the IspH family. Requires [4Fe-4S] cluster as cofactor.

It carries out the reaction isopentenyl diphosphate + 2 oxidized [2Fe-2S]-[ferredoxin] + H2O = (2E)-4-hydroxy-3-methylbut-2-enyl diphosphate + 2 reduced [2Fe-2S]-[ferredoxin] + 2 H(+). It catalyses the reaction dimethylallyl diphosphate + 2 oxidized [2Fe-2S]-[ferredoxin] + H2O = (2E)-4-hydroxy-3-methylbut-2-enyl diphosphate + 2 reduced [2Fe-2S]-[ferredoxin] + 2 H(+). It participates in isoprenoid biosynthesis; dimethylallyl diphosphate biosynthesis; dimethylallyl diphosphate from (2E)-4-hydroxy-3-methylbutenyl diphosphate: step 1/1. The protein operates within isoprenoid biosynthesis; isopentenyl diphosphate biosynthesis via DXP pathway; isopentenyl diphosphate from 1-deoxy-D-xylulose 5-phosphate: step 6/6. Functionally, catalyzes the conversion of 1-hydroxy-2-methyl-2-(E)-butenyl 4-diphosphate (HMBPP) into a mixture of isopentenyl diphosphate (IPP) and dimethylallyl diphosphate (DMAPP). Acts in the terminal step of the DOXP/MEP pathway for isoprenoid precursor biosynthesis. In Acinetobacter baumannii (strain AB307-0294), this protein is 4-hydroxy-3-methylbut-2-enyl diphosphate reductase.